The sequence spans 959 residues: Glycine dehydrogenase (decarboxylating) (959 aa).

Position 708 is an N6-(pyridoxal phosphate)lysine (K708).

It belongs to the GcvP family. In terms of assembly, the glycine cleavage system is composed of four proteins: P, T, L and H. Pyridoxal 5'-phosphate serves as cofactor.

The catalysed reaction is N(6)-[(R)-lipoyl]-L-lysyl-[glycine-cleavage complex H protein] + glycine + H(+) = N(6)-[(R)-S(8)-aminomethyldihydrolipoyl]-L-lysyl-[glycine-cleavage complex H protein] + CO2. Functionally, the glycine cleavage system catalyzes the degradation of glycine. The P protein binds the alpha-amino group of glycine through its pyridoxal phosphate cofactor; CO(2) is released and the remaining methylamine moiety is then transferred to the lipoamide cofactor of the H protein. In Yersinia pseudotuberculosis serotype O:1b (strain IP 31758), this protein is Glycine dehydrogenase (decarboxylating).